The primary structure comprises 78 residues: Translation initiation factor IF-1, chloroplastic (78 aa).

The S1-like domain maps to 1–72; the sequence is MEKQKLIDME…TKGRITYRLR (72 aa).

This sequence belongs to the IF-1 family. Component of the 30S ribosomal translation pre-initiation complex which assembles on the 30S ribosome in the order IF-2 and IF-3, IF-1 and N-formylmethionyl-tRNA(fMet); mRNA recruitment can occur at any time during PIC assembly.

It is found in the plastid. The protein localises to the chloroplast. Functionally, one of the essential components for the initiation of protein synthesis. Stabilizes the binding of IF-2 and IF-3 on the 30S subunit to which N-formylmethionyl-tRNA(fMet) subsequently binds. Helps modulate mRNA selection, yielding the 30S pre-initiation complex (PIC). Upon addition of the 50S ribosomal subunit IF-1, IF-2 and IF-3 are released leaving the mature 70S translation initiation complex. The polypeptide is Translation initiation factor IF-1, chloroplastic (Marchantia polymorpha (Common liverwort)).